The following is an 881-amino-acid chain: Fanconi anemia core complex-associated protein 100 (881 aa).

A disordered region spans residues 94–119; it reads GRSRSTSQDDRDSEDGDQPSPVIPVD. S667 carries the post-translational modification Phosphoserine.

In terms of assembly, belongs to the multisubunit FA complex composed of FANCA, FANCB, FANCC, FANCE, FANCF, FANCG, FANCL/PHF9, FANCM, FAAP24 and FAAP100. Forms a subcomplex with FANCB and FANCL.

It is found in the nucleus. Its function is as follows. Plays a role in Fanconi anemia-associated DNA damage response network. Regulates FANCD2 monoubiquitination and the stability of the FA core complex. Induces chromosomal instability as well as hypersensitivity to DNA cross-linking agents, when repressed. In Homo sapiens (Human), this protein is Fanconi anemia core complex-associated protein 100.